Here is a 176-residue protein sequence, read N- to C-terminus: CASP-like protein 5A1 (176 aa).

The Cytoplasmic portion of the chain corresponds to 1-45 (MDASHPAVYPVGVPPTAVDPPPRVRMKDYEGMPSTLGGLVLRSGQ). Residues 46–66 (FACAVTALSIMISIPDFSSVT) traverse the membrane as a helical segment. Residue Ala-67 is a topological domain, extracellular. The chain crosses the membrane as a helical span at residues 68–88 (FCYLVAAMALQLLWSVSLAVV). At 89–102 (DGYALLLRRTLHNP) the chain is on the cytoplasmic side. A helical membrane pass occupies residues 103–123 (VLLSLLVIGDWVTSTLSLAAA). Over 124-151 (CSSAGITVLIDSDLAQCAHNHCGRYEAA) the chain is Extracellular. The chain crosses the membrane as a helical span at residues 152–172 (VAMAFLTWFLVSLSFFFSFWL). Residues 173-176 (LATR) are Cytoplasmic-facing.

Belongs to the Casparian strip membrane proteins (CASP) family. Homodimer and heterodimers.

The protein resides in the cell membrane. The sequence is that of CASP-like protein 5A1 from Selaginella moellendorffii (Spikemoss).